A 425-amino-acid polypeptide reads, in one-letter code: Metalloprotease AF_0655 (425 aa).

This sequence belongs to the peptidase U62 family.

Probable metalloprotease. This chain is Metalloprotease AF_0655, found in Archaeoglobus fulgidus (strain ATCC 49558 / DSM 4304 / JCM 9628 / NBRC 100126 / VC-16).